Here is a 357-residue protein sequence, read N- to C-terminus: Anthranilate phosphoribosyltransferase (357 aa).

5-phospho-alpha-D-ribose 1-diphosphate-binding positions include Gly-91, 94 to 95, Thr-99, 101 to 104, 119 to 127, and Ser-131; these read GD, NIST, and KHGNRSVSS. Position 91 (Gly-91) interacts with anthranilate. Ser-103 provides a ligand contact to Mg(2+). Asn-122 is an anthranilate binding site. Arg-177 is an anthranilate binding site. The Mg(2+) site is built by Asp-235 and Glu-236.

It belongs to the anthranilate phosphoribosyltransferase family. Homodimer. Mg(2+) serves as cofactor.

It carries out the reaction N-(5-phospho-beta-D-ribosyl)anthranilate + diphosphate = 5-phospho-alpha-D-ribose 1-diphosphate + anthranilate. It participates in amino-acid biosynthesis; L-tryptophan biosynthesis; L-tryptophan from chorismate: step 2/5. In terms of biological role, catalyzes the transfer of the phosphoribosyl group of 5-phosphorylribose-1-pyrophosphate (PRPP) to anthranilate to yield N-(5'-phosphoribosyl)-anthranilate (PRA). The polypeptide is Anthranilate phosphoribosyltransferase (Shewanella baltica (strain OS185)).